Here is a 144-residue protein sequence, read N- to C-terminus: Gastric inhibitory polypeptide (144 aa).

An N-terminal signal peptide occupies residues 1 to 21; sequence MVALKTCSLLLVLLFLAVGLG. Propeptides lie at residues 22-42 and 87-144; these read EKEEVEFRSHAKFAGPRPRGP and EARA…LRSQ. A disordered region spans residues 94 to 113; it reads AGQSQGKEDKEAQESSLPKS.

It belongs to the glucagon family.

It is found in the secreted. Potent stimulator of insulin secretion and relatively poor inhibitor of gastric acid secretion. The chain is Gastric inhibitory polypeptide (Gip) from Mus musculus (Mouse).